Reading from the N-terminus, the 585-residue chain is ATP-dependent RNA helicase DBP3 (585 aa).

Residues 1 to 124 (MTTSATEKAL…SSSASAASFT (124 aa)) are disordered. Positions 26–43 (AKAAAAAGASASTSLEGS) are enriched in low complexity. 2 stretches are compositionally biased toward basic residues: residues 52–64 (KDKKDKKDKKDKK) and 79–93 (AKKRRKEEKKAKKAA). The span at 94–124 (AKSGAATSLESTPAASPAPAASSSASAASFT) shows a compositional bias: low complexity. The Q motif motif lies at 159-187 (FRELDGKVDAAVKKTLDSQGFSTPTPIQA). Residues 190 to 377 (WPVLLQNKDV…ESFMNGPVRV (188 aa)) enclose the Helicase ATP-binding domain. 203–210 (AETGSGKT) contributes to the ATP binding site. A DEAD box motif is present at residues 322–325 (DEAD). One can recognise a Helicase C-terminal domain in the interval 406–554 (RLNDFLRSVN…KVPDALTKFP (149 aa)).

Belongs to the DEAD box helicase family. DDX5/DBP2 subfamily.

Its subcellular location is the nucleus. The protein resides in the nucleolus. It catalyses the reaction ATP + H2O = ADP + phosphate + H(+). ATP-dependent RNA helicase required for 60S ribosomal subunit synthesis. Involved in efficient pre-rRNA processing, predominantly at site A3, which is necessary for the normal formation of 25S and 5.8S rRNAs. In Mycosarcoma maydis (Corn smut fungus), this protein is ATP-dependent RNA helicase DBP3 (DBP3).